A 286-amino-acid chain; its full sequence is Beta-lactamase SHV-8 (286 aa).

Positions 1–21 are cleaved as a signal peptide; the sequence is MRYIRLCIISLLATLPLAVHA. Catalysis depends on S66, which acts as the Acyl-ester intermediate. An intrachain disulfide couples C73 to C119. Residue E164 is the Proton acceptor of the active site. 230–232 is a binding site for substrate; sequence KTG.

This sequence belongs to the class-A beta-lactamase family.

The enzyme catalyses a beta-lactam + H2O = a substituted beta-amino acid. In terms of biological role, SHV enzymes hydrolyze broad spectrum cephalosporins notably cefotaxime and ceftazidime. The sequence is that of Beta-lactamase SHV-8 (bla) from Escherichia coli.